We begin with the raw amino-acid sequence, 232 residues long: Large ribosomal subunit protein uL1 (232 aa).

Belongs to the universal ribosomal protein uL1 family. Part of the 50S ribosomal subunit.

In terms of biological role, binds directly to 23S rRNA. The L1 stalk is quite mobile in the ribosome, and is involved in E site tRNA release. Functionally, protein L1 is also a translational repressor protein, it controls the translation of the L11 operon by binding to its mRNA. This Alkaliphilus oremlandii (strain OhILAs) (Clostridium oremlandii (strain OhILAs)) protein is Large ribosomal subunit protein uL1.